Here is a 292-residue protein sequence, read N- to C-terminus: Probable E3 ubiquitin-protein ligase RNF144A (292 aa).

Positions 16 to 236 (PLVSCKLCLG…YDKGPCRNKL (221 aa)) are TRIAD supradomain. Residues Cys20, Cys23, Cys43, Cys46, Cys111, Cys116, Cys135, Cys138, Cys143, Cys146, His151, Cys156, Cys185, and Cys188 each contribute to the Zn(2+) site. The RING-type 1 zinc-finger motif lies at 20-70 (CKLCLGEYTVEQMTTIAQCQCIFCTLCLKQYVELLIKEGLETAISCPDASC). The IBR-type zinc-finger motif lies at 91-156 (QKYKKLQFEK…KANWHPGQGC (66 aa)). The RING-type 2; atypical zinc-finger motif lies at 185–214 (CPKCKVYIERDEGCAQMMCKNCKHAFCWYC). Cys198 is an active-site residue. Cys203, Cys206, Cys211, Cys214, His226, and Cys232 together coordinate Zn(2+). Residues 250-270 (VVGIFAGFGLLLLVASPFLLL) traverse the membrane as a helical segment.

It belongs to the RBR family. RNF144 subfamily.

The protein resides in the membrane. The enzyme catalyses [E2 ubiquitin-conjugating enzyme]-S-ubiquitinyl-L-cysteine + [acceptor protein]-L-lysine = [E2 ubiquitin-conjugating enzyme]-L-cysteine + [acceptor protein]-N(6)-ubiquitinyl-L-lysine.. The protein operates within protein modification; protein ubiquitination. Its function is as follows. E3 ubiquitin-protein ligase which accepts ubiquitin from E2 ubiquitin-conjugating enzymes ube2l3 and ube2l6 in the form of a thioester and then directly transfers the ubiquitin to targeted substrates. This chain is Probable E3 ubiquitin-protein ligase RNF144A (rnf144a), found in Xenopus tropicalis (Western clawed frog).